A 249-amino-acid chain; its full sequence is Indole-3-glycerol phosphate synthase (249 aa).

Belongs to the TrpC family.

It catalyses the reaction 1-(2-carboxyphenylamino)-1-deoxy-D-ribulose 5-phosphate + H(+) = (1S,2R)-1-C-(indol-3-yl)glycerol 3-phosphate + CO2 + H2O. It participates in amino-acid biosynthesis; L-tryptophan biosynthesis; L-tryptophan from chorismate: step 4/5. The sequence is that of Indole-3-glycerol phosphate synthase from Pyrobaculum neutrophilum (strain DSM 2338 / JCM 9278 / NBRC 100436 / V24Sta) (Thermoproteus neutrophilus).